The chain runs to 225 residues: Ribonuclease 3 (225 aa).

The RNase III domain maps to 7–129; the sequence is LPRLGRILGY…IIGAIYLDAD (123 aa). Glutamate 42 is a Mg(2+) binding site. The active site involves aspartate 46. Positions 115 and 118 each coordinate Mg(2+). The active site involves glutamate 118. One can recognise a DRBM domain in the interval 155–225; that stretch reads DPKTLLQEHL…AAEVLERIKK (71 aa).

It belongs to the ribonuclease III family. In terms of assembly, homodimer. Mg(2+) serves as cofactor.

The protein resides in the cytoplasm. It carries out the reaction Endonucleolytic cleavage to 5'-phosphomonoester.. Digests double-stranded RNA. Involved in the processing of primary rRNA transcript to yield the immediate precursors to the large and small rRNAs (23S and 16S). Processes some mRNAs, and tRNAs when they are encoded in the rRNA operon. Processes pre-crRNA and tracrRNA of type II CRISPR loci if present in the organism. The chain is Ribonuclease 3 from Shewanella loihica (strain ATCC BAA-1088 / PV-4).